The primary structure comprises 123 residues: UPF0102 protein SPO0400 (123 aa).

It belongs to the UPF0102 family.

In Ruegeria pomeroyi (strain ATCC 700808 / DSM 15171 / DSS-3) (Silicibacter pomeroyi), this protein is UPF0102 protein SPO0400.